The following is a 124-amino-acid chain: Large ribosomal subunit protein bL12 (124 aa).

The protein belongs to the bacterial ribosomal protein bL12 family. As to quaternary structure, homodimer. Part of the ribosomal stalk of the 50S ribosomal subunit. Forms a multimeric L10(L12)X complex, where L10 forms an elongated spine to which 2 to 4 L12 dimers bind in a sequential fashion. Binds GTP-bound translation factors.

Forms part of the ribosomal stalk which helps the ribosome interact with GTP-bound translation factors. Is thus essential for accurate translation. The polypeptide is Large ribosomal subunit protein bL12 (Phytoplasma australiense).